A 346-amino-acid polypeptide reads, in one-letter code: Ferredoxin--NADP reductase (346 aa).

Positions 35, 43, 48, 88, 122, 287, and 327 each coordinate FAD.

The protein belongs to the ferredoxin--NADP reductase type 2 family. As to quaternary structure, homodimer. Requires FAD as cofactor.

It carries out the reaction 2 reduced [2Fe-2S]-[ferredoxin] + NADP(+) + H(+) = 2 oxidized [2Fe-2S]-[ferredoxin] + NADPH. This chain is Ferredoxin--NADP reductase, found in Oenococcus oeni (strain ATCC BAA-331 / PSU-1).